The primary structure comprises 392 residues: Pyoverdine export membrane fusion protein PvdR (392 aa).

The segment at residues 1–36 (MRRSTHTRRRLLLGGLGLLGLGSLLAWTSLPFGAQP) is a signal peptide (tat-type signal). Residues 109–181 (IDNLKAQLAE…NASLRSDEAE (73 aa)) are a coiled coil. The interval 267–286 (PPKPLDQTSQGGGSPASATA) is disordered.

This sequence belongs to the membrane fusion protein (MFP) (TC 8.A.1) family. Part of the tripartite efflux system PvdRT-OpmQ, which is composed of an inner membrane component with both ATPase and permease domains, PvdT, a periplasmic membrane fusion protein, PvdR, and an outer membrane component, OpmQ. Predicted to be exported by the Tat system. The position of the signal peptide cleavage has not been experimentally proven.

The protein resides in the periplasm. Functionally, part of the tripartite efflux system PvdRT-OpmQ required for the secretion into the extracellular milieu of the siderophore pyoverdine (PVD), which is involved in iron acquisition. This subunit is an adapter protein that stimulates the ATPase activity of PvdT and connects the inner and outer membrane components. The system is responsible for export of newly synthesized PVD after the final steps of biosynthesis have taken place in the periplasm. It is also responsible for recycling of PVD after internalization of ferri-PVD into the periplasm by the outer-membrane receptor FpvA and release of iron from PVD, thus making PVD available for new cycles of iron uptake. Contributes to resistance against ampicillin. In Pseudomonas putida (strain ATCC 47054 / DSM 6125 / CFBP 8728 / NCIMB 11950 / KT2440), this protein is Pyoverdine export membrane fusion protein PvdR.